A 155-amino-acid polypeptide reads, in one-letter code: Ribosomal RNA large subunit methyltransferase H (155 aa).

Residues Leu73, Gly104, and 123–128 (ISKMTF) each bind S-adenosyl-L-methionine.

The protein belongs to the RNA methyltransferase RlmH family. In terms of assembly, homodimer.

Its subcellular location is the cytoplasm. The catalysed reaction is pseudouridine(1915) in 23S rRNA + S-adenosyl-L-methionine = N(3)-methylpseudouridine(1915) in 23S rRNA + S-adenosyl-L-homocysteine + H(+). Specifically methylates the pseudouridine at position 1915 (m3Psi1915) in 23S rRNA. This chain is Ribosomal RNA large subunit methyltransferase H, found in Francisella tularensis subsp. novicida (strain U112).